A 301-amino-acid chain; its full sequence is Glycine--tRNA ligase alpha subunit (301 aa).

The protein belongs to the class-II aminoacyl-tRNA synthetase family. In terms of assembly, tetramer of two alpha and two beta subunits.

It localises to the cytoplasm. It catalyses the reaction tRNA(Gly) + glycine + ATP = glycyl-tRNA(Gly) + AMP + diphosphate. The protein is Glycine--tRNA ligase alpha subunit of Pseudoalteromonas atlantica (strain T6c / ATCC BAA-1087).